We begin with the raw amino-acid sequence, 164 residues long: UPF0114 protein BCI_0033 (164 aa).

A run of 3 helical transmembrane segments spans residues 15–35 (LLFP…LKFF), 53–73 (LILI…LVMV), and 136–156 (IMWC…MAYI).

Belongs to the UPF0114 family.

It is found in the cell membrane. This is UPF0114 protein BCI_0033 from Baumannia cicadellinicola subsp. Homalodisca coagulata.